We begin with the raw amino-acid sequence, 269 residues long: Regulatory protein RecX (269 aa).

This sequence belongs to the RecX family.

It localises to the cytoplasm. Its function is as follows. Modulates RecA activity. This is Regulatory protein RecX from Listeria monocytogenes serotype 4b (strain CLIP80459).